A 246-amino-acid polypeptide reads, in one-letter code: Acetoacetate decarboxylase (246 aa).

Residue lysine 116 is the Schiff-base intermediate with acetoacetate of the active site.

The protein belongs to the ADC family.

The catalysed reaction is acetoacetate + H(+) = acetone + CO2. Its function is as follows. Catalyzes the conversion of acetoacetate to acetone and carbon dioxide. In Burkholderia ambifaria (strain MC40-6), this protein is Acetoacetate decarboxylase.